The primary structure comprises 124 residues: Fluoride-specific ion channel FluC 1 (124 aa).

Helical transmembrane passes span 4-24, 36-56, 67-87, and 103-123; these read VLIG…GAWI, GTFA…GLVV, VVLG…LLDL, and AALS…LGWG. Residues glycine 75 and threonine 78 each coordinate Na(+).

It belongs to the fluoride channel Fluc/FEX (TC 1.A.43) family.

It localises to the cell membrane. The enzyme catalyses fluoride(in) = fluoride(out). With respect to regulation, na(+) is not transported, but it plays an essential structural role and its presence is essential for fluoride channel function. Fluoride-specific ion channel. Important for reducing fluoride concentration in the cell, thus reducing its toxicity. The sequence is that of Fluoride-specific ion channel FluC 1 from Symbiobacterium thermophilum (strain DSM 24528 / JCM 14929 / IAM 14863 / T).